The chain runs to 72 residues: U1-sicaritoxin-Sdo1a (72 aa).

A signal peptide spans 1–24; that stretch reads MMKKFTCFLLCATILCAIFCVSVA. Positions 25 to 41 are excised as a propeptide; sequence EKFHKMKSDIERDETPM. 3 disulfide bridges follow: cysteine 43/cysteine 61, cysteine 50/cysteine 64, and cysteine 60/cysteine 69.

Expressed by the venom gland.

The protein resides in the secreted. In Hexophthalma dolichocephala (Afrotropical spider), this protein is U1-sicaritoxin-Sdo1a.